The chain runs to 102 residues: Malonate decarboxylase acyl carrier protein (102 aa).

Position 27 is an O-(phosphoribosyl dephospho-coenzyme A)serine (S27).

It belongs to the MdcC family. Post-translationally, covalently binds the prosthetic group of malonate decarboxylase.

The protein resides in the cytoplasm. Its function is as follows. Subunit of malonate decarboxylase, it is an acyl carrier protein to which acetyl and malonyl thioester residues are bound via a 2'-(5''-phosphoribosyl)-3'-dephospho-CoA prosthetic group and turn over during the catalytic mechanism. This chain is Malonate decarboxylase acyl carrier protein, found in Acinetobacter calcoaceticus.